The chain runs to 519 residues: Probable anion transporter 3, chloroplastic (519 aa).

The transit peptide at 1–76 (MAPPGQLLPL…PPPPATSLPG (76 aa)) directs the protein to the chloroplast. The span at 56–72 (LPFAPPRRLSRPPPPAT) shows a compositional bias: pro residues. The interval 56–82 (LPFAPPRRLSRPPPPATSLPGASPGGG) is disordered. The next 12 helical transmembrane spans lie at 100 to 120 (VAAM…VMSV), 138 to 158 (VVQS…GALV), 166 to 186 (VMAY…WAAA), 188 to 208 (SLWL…VALP), 229 to 249 (IAMA…PIIM), 253 to 273 (GIFG…LVWI), 326 to 346 (WALI…LSWM), 362 to 382 (AWFS…AGVV), 403 to 423 (IGFV…SPVI), 424 to 444 (ASAW…GFLV), 460 to 480 (MSNT…GFFV), and 488 to 508 (GFLI…DIFA).

Belongs to the major facilitator superfamily. Sodium/anion cotransporter (TC 2.A.1.14) family.

The protein resides in the plastid. It is found in the chloroplast membrane. Its function is as follows. Probable anion transporter. The protein is Probable anion transporter 3, chloroplastic (PHT4;3) of Oryza sativa subsp. japonica (Rice).